Reading from the N-terminus, the 861-residue chain is Leucine--tRNA ligase (861 aa).

The 'HIGH' region signature appears at 42 to 52; sequence PYPSGKLHMGH. Positions 620-624 match the 'KMSKS' region motif; sequence KMSKS. Lysine 623 is a binding site for ATP.

It belongs to the class-I aminoacyl-tRNA synthetase family.

The protein resides in the cytoplasm. It carries out the reaction tRNA(Leu) + L-leucine + ATP = L-leucyl-tRNA(Leu) + AMP + diphosphate. The sequence is that of Leucine--tRNA ligase from Marinobacter nauticus (strain ATCC 700491 / DSM 11845 / VT8) (Marinobacter aquaeolei).